Consider the following 337-residue polypeptide: Inositol 2-dehydrogenase (337 aa).

Belongs to the Gfo/Idh/MocA family. Homotetramer.

The enzyme catalyses myo-inositol + NAD(+) = scyllo-inosose + NADH + H(+). In terms of biological role, involved in the oxidation of myo-inositol (MI) to 2-keto-myo-inositol (2KMI or 2-inosose). The protein is Inositol 2-dehydrogenase of Klebsiella pneumoniae subsp. pneumoniae (strain ATCC 700721 / MGH 78578).